The chain runs to 115 residues: NADH-ubiquinone oxidoreductase chain 3 (115 aa).

The next 3 membrane-spanning stretches (helical) occupy residues 1 to 21 (MMML…VMLL), 58 to 78 (IAVI…IVII), and 84 to 104 (IMVW…GLYY).

It belongs to the complex I subunit 3 family.

It localises to the mitochondrion membrane. It carries out the reaction a ubiquinone + NADH + 5 H(+)(in) = a ubiquinol + NAD(+) + 4 H(+)(out). Its function is as follows. Core subunit of the mitochondrial membrane respiratory chain NADH dehydrogenase (Complex I) that is believed to belong to the minimal assembly required for catalysis. Complex I functions in the transfer of electrons from NADH to the respiratory chain. The immediate electron acceptor for the enzyme is believed to be ubiquinone. The chain is NADH-ubiquinone oxidoreductase chain 3 (ND3) from Locusta migratoria (Migratory locust).